A 60-amino-acid polypeptide reads, in one-letter code: Large ribosomal subunit protein uL30 (60 aa).

Belongs to the universal ribosomal protein uL30 family. Part of the 50S ribosomal subunit.

The protein is Large ribosomal subunit protein uL30 of Lysinibacillus sphaericus (strain C3-41).